Consider the following 185-residue polypeptide: MLTQIKQDAQTRMTKSIDALRHSLTTVRTGRASPALLDGIKVKAYGTDTPLNQVASISVSEGRSLVISLFDKGMIKDVEKAIYASDLGLTPTVVGTVIRLNLPPLTEERRKELSKSVHGEGEDSKVAIRNIRRDANQQVKDLLKDKAVTEDEARGAEDDIQKLTDKAIKDVDEVVKAKEQELMTV.

The protein belongs to the RRF family.

The protein resides in the cytoplasm. Responsible for the release of ribosomes from messenger RNA at the termination of protein biosynthesis. May increase the efficiency of translation by recycling ribosomes from one round of translation to another. This Xanthomonas oryzae pv. oryzae (strain MAFF 311018) protein is Ribosome-recycling factor.